Consider the following 550-residue polypeptide: Arginine--tRNA ligase (550 aa).

Positions 125–135 match the 'HIGH' region motif; sequence ANPTGPLHIGH.

It belongs to the class-I aminoacyl-tRNA synthetase family. Monomer.

The protein resides in the cytoplasm. It catalyses the reaction tRNA(Arg) + L-arginine + ATP = L-arginyl-tRNA(Arg) + AMP + diphosphate. This chain is Arginine--tRNA ligase, found in Lawsonia intracellularis (strain PHE/MN1-00).